A 970-amino-acid polypeptide reads, in one-letter code: uncharacterized protein (970 aa).

Residues 11 to 31 traverse the membrane as a helical segment; the sequence is WILKIGTILGLVCLGLFGVIF. The disordered stretch occupies residues 366–387; the sequence is ASNSNDNNNQNNNNNNNSSDVI. Residues 367–387 show a composition bias toward low complexity; it reads SNSNDNNNQNNNNNNNSSDVI. A run of 11 helical transmembrane segments spans residues 515–535, 537–557, 558–578, 614–634, 645–665, 726–746, 762–782, 789–809, 816–836, 877–897, and 903–923; these read FASS…LLTL, YKLL…SSLV, IFSA…FFVI, FFAN…VIYL, LMAI…IVLI, FLFV…LYLV, SNGI…YCLI, CLSY…VMYL, IDQS…FFAA, IESS…FGGI, and LVIF…AFLP.

The protein resides in the cell membrane. This is an uncharacterized protein from Mycoplasma genitalium (strain ATCC 33530 / DSM 19775 / NCTC 10195 / G37) (Mycoplasmoides genitalium).